A 149-amino-acid polypeptide reads, in one-letter code: Calmodulin-like protein (149 aa).

EF-hand domains lie at 6–41 (TTQALYKEAFNLFDKDKDGKITIQELGIVMRSVGSN), 42–76 (PTQQELKDIAKEIDDGSGLVDFSKFSSLMTRKMKY), 78–113 (DSEADIKQAFKVFDKKGNGYANIQDLKHTLTSIGEK), and 113–148 (KLTKEEFDNMLKDAKTVDGQIHVDEFVRVIKSSKSF). Ca(2+)-binding residues include D19, D21, D23, K25, and E30.

The protein belongs to the calmodulin family.

The protein resides in the contractile vacuole. Mediates the control of a large number of enzymes, ion channels and other proteins by Ca(2+) ions. Among the enzymes to be stimulated by the calmodulin-Ca(2+) complex are a number of protein kinases and phosphatases. This chain is Calmodulin-like protein (calB), found in Dictyostelium discoideum (Social amoeba).